The following is a 554-amino-acid chain: CTP synthase (554 aa).

An amidoligase domain region spans residues Met-1–Leu-270. Ser-13 contacts CTP. UTP is bound at residue Ser-13. Residues Ser-14–Ile-19 and Asp-71 each bind ATP. The Mg(2+) site is built by Asp-71 and Glu-144. Residues Asp-151–Glu-153, Lys-191–Gln-196, and Lys-227 each bind CTP. UTP is bound by residues Lys-191–Gln-196 and Lys-227. The Glutamine amidotransferase type-1 domain maps to Thr-295–Ala-548. Residue Gly-357 coordinates L-glutamine. Residue Cys-384 is the Nucleophile; for glutamine hydrolysis of the active site. L-glutamine-binding positions include Leu-385–Gln-388, Glu-408, and Arg-474. Catalysis depends on residues His-521 and Glu-523.

This sequence belongs to the CTP synthase family. In terms of assembly, homotetramer.

It catalyses the reaction UTP + L-glutamine + ATP + H2O = CTP + L-glutamate + ADP + phosphate + 2 H(+). The enzyme catalyses L-glutamine + H2O = L-glutamate + NH4(+). The catalysed reaction is UTP + NH4(+) + ATP = CTP + ADP + phosphate + 2 H(+). The protein operates within pyrimidine metabolism; CTP biosynthesis via de novo pathway; CTP from UDP: step 2/2. Its activity is regulated as follows. Allosterically activated by GTP, when glutamine is the substrate; GTP has no effect on the reaction when ammonia is the substrate. The allosteric effector GTP functions by stabilizing the protein conformation that binds the tetrahedral intermediate(s) formed during glutamine hydrolysis. Inhibited by the product CTP, via allosteric rather than competitive inhibition. In terms of biological role, catalyzes the ATP-dependent amination of UTP to CTP with either L-glutamine or ammonia as the source of nitrogen. Regulates intracellular CTP levels through interactions with the four ribonucleotide triphosphates. This is CTP synthase from Verminephrobacter eiseniae (strain EF01-2).